A 262-amino-acid polypeptide reads, in one-letter code: Large ribosomal subunit protein uL5c (262 aa).

The N-terminal 39 residues, 1–39 (MASPSLLQSSASSFHGRFSPLAAPSSARMLSPPLRNVVK), are a transit peptide targeting the chloroplast.

Belongs to the universal ribosomal protein uL5 family. As to quaternary structure, part of the 50S ribosomal subunit; contacts the 5S rRNA.

The protein localises to the plastid. It localises to the chloroplast. Binds 5S rRNA, forms part of the central protuberance of the 50S subunit. This chain is Large ribosomal subunit protein uL5c (RPL5), found in Arabidopsis thaliana (Mouse-ear cress).